The following is a 426-amino-acid chain: Enolase (426 aa).

A phosphoenolpyruvate-binding site is contributed by glycine 41. A Mg(2+)-binding site is contributed by serine 43. Glutamate 165 contacts phosphoenolpyruvate. (2R)-2-phosphoglycerate-binding residues include glutamate 165 and glutamate 206. Glutamate 206 serves as the catalytic Proton donor. Residues aspartate 243, glutamate 286, and aspartate 313 each contribute to the Mg(2+) site. Residues aspartate 313, lysine 338, arginine 367, serine 368, and lysine 389 each contribute to the phosphoenolpyruvate site. Positions 338, 367, and 368 each coordinate (2R)-2-phosphoglycerate. The active-site Proton acceptor is the lysine 338.

Belongs to the enolase family. In terms of assembly, homodimer. Mg(2+) is required as a cofactor.

Its subcellular location is the cytoplasm. The protein resides in the secreted. It localises to the cell surface. The catalysed reaction is (2R)-2-phosphoglycerate = phosphoenolpyruvate + H2O. Its pathway is carbohydrate degradation; glycolysis; pyruvate from D-glyceraldehyde 3-phosphate: step 4/5. In terms of biological role, catalyzes the reversible conversion of 2-phosphoglycerate (2-PG) into phosphoenolpyruvate (PEP). It is essential for the degradation of carbohydrates via glycolysis. This Chloroflexus aurantiacus (strain ATCC 29366 / DSM 635 / J-10-fl) protein is Enolase.